The primary structure comprises 272 residues: MLALIYSARDPAGSGTARIIRELLGGDRCSLPRAVECTLLSNGVYLVGFDADSIFLDFLGEVLPANIEGYVVLSRHSGGKPSLTVHHTGNPGPEAPYGGKPWSLAPAWPRTAAGLLRTYRRVAEEMGLTGEFQVTLEATHHGPTELEKPIVFIEIGSSEREWVRRDTQNAMAETVIRFMERDLVSVECSKVAIGIGDTHYPIKHTRNVLERGYCYSHIFSKHVLDNLTLELLEQALEKTRDKVDTVVLAKVPSRVKQLARSFAEKYGLQLEK.

The protein belongs to the DtdA deacylase family. In terms of assembly, monomer. It depends on Zn(2+) as a cofactor.

It catalyses the reaction a D-aminoacyl-tRNA + H2O = a tRNA + a D-alpha-amino acid + H(+). It carries out the reaction glycyl-tRNA(Ala) + H2O = tRNA(Ala) + glycine + H(+). In terms of biological role, D-aminoacyl-tRNA deacylase with broad substrate specificity. By recycling D-aminoacyl-tRNA to D-amino acids and free tRNA molecules, this enzyme counteracts the toxicity associated with the formation of D-aminoacyl-tRNA entities in vivo. The chain is D-aminoacyl-tRNA deacylase from Hyperthermus butylicus (strain DSM 5456 / JCM 9403 / PLM1-5).